Reading from the N-terminus, the 959-residue chain is E3 ubiquitin-protein ligase NEDD4-like (959 aa).

Residues 10–130 (PWHGVCVPVC…TEDPTMERPY (121 aa)) enclose the C2 domain. Disordered stretches follow at residues 183–206 (SNDS…WEEK), 248–275 (AAHR…DVPE), and 289–316 (DSLG…EELS). Positions 197 to 230 (PPLPPGWEEKVDNLGRTYYVNHNNRTTQWHRPSL) constitute a WW 1 domain. Ser316 is modified (phosphoserine). Thr322 is subject to Phosphothreonine. Ser346 is subject to Phosphoserine; by WNK1 and WNK4. Residues 369–402 (PGLPSGWEERKDAKGRTYYVNHNNRTTTWTRPIM) form the WW 2 domain. The interval 408–478 (GASGSATNSN…YNSPKPQHKV (71 aa)) is disordered. The residue at position 430 (Ser430) is a Phosphoserine. Ser432 bears the Phosphoserine; by SGK1 mark. Ser433 carries the phosphoserine; by WNK1 and WNK4 modification. Positions 444 to 455 (GAKDSPVRRAVK) are enriched in basic and acidic residues. Ser448 carries the post-translational modification Phosphoserine; by SGK1. 4 positions are modified to phosphoserine: Ser459, Ser463, Ser467, and Ser471. 2 WW domains span residues 481 to 514 (SFLP…DPRL) and 532 to 565 (GPLP…DPRL). An HECT domain is found at 624-958 (RPDVLKARLW…VENAQGFEGV (335 aa)). Cys926 acts as the Glycyl thioester intermediate in catalysis.

In terms of assembly, interacts with UBE2E3. Interacts with NDFIP1; this interaction activates the E3 ubiquitin-protein ligase. Interacts with NDFIP2; this interaction activates the E3 ubiquitin-protein ligase. Interacts (via WW domains) with SCN1A. Interacts (via WW domains) with SCN2A. Interacts (via WW domains) with SCN3A. Interacts (via WW domains) with SCN5A. Interacts (via WW domains) with SCN8A. Interacts (via WW domains) with SCN9A. Interacts (via WW domains) with SCN10A. Interacts (via WW domains) with CLCN5. Interacts with SMAD2. Interacts with SMAD3. Interacts with SMAD6. Interacts with SMAD7. The phosphorylated form interacts with 14-3-3 proteins. Interacts with TNK2. Interacts with WNK1. Interacts with SGK1. Interacts (via C2 domain) with NPC2. Interacts with ARRDC4. Interacts with KCNQ1; promotes internalization of KCNQ1. Interacts (via domains WW1, 3 and 4) with USP36; the interaction inhibits ubiquitination of, at least, NTRK1, KCNQ2 and KCNQ3 by NEDD4L. Interacts with PRRG4 (via cytoplasmic domain). Interacts with LDLRAD3; the interaction is direct. Interacts with TTYH2 and TTYH3. Phosphorylated; which impairs interaction with SCNN. Interaction with YWHAH inhibits dephosphorylation. In terms of processing, auto-ubiquitinated.

It is found in the cytoplasm. Its subcellular location is the golgi apparatus. The protein localises to the endosome. The protein resides in the multivesicular body. The enzyme catalyses S-ubiquitinyl-[E2 ubiquitin-conjugating enzyme]-L-cysteine + [acceptor protein]-L-lysine = [E2 ubiquitin-conjugating enzyme]-L-cysteine + N(6)-ubiquitinyl-[acceptor protein]-L-lysine.. It functions in the pathway protein modification; protein ubiquitination. Activated by NDFIP1- and NDFIP2-binding. In terms of biological role, E3 ubiquitin-protein ligase which accepts ubiquitin from an E2 ubiquitin-conjugating enzyme in the form of a thioester and then directly transfers the ubiquitin to targeted substrates. Inhibits TGF-beta signaling by triggering SMAD2 and TGFBR1 ubiquitination and proteasome-dependent degradation. Promotes ubiquitination and internalization of various plasma membrane channels such as ENaC, Nav1.2, Nav1.3, Nav1.5, Nav1.7, Nav1.8, Kv1.3, KCNH2, EAAT1 or CLC5. Promotes ubiquitination and degradation of SGK1 and TNK2. Ubiquitinates BRAT1 and this ubiquitination is enhanced in the presence of NDFIP1. Plays a role in dendrite formation by melanocytes. Involved in the regulation of TOR signaling. Ubiquitinates TTYH2 and TTYH3 and regulates protein levels of TTYH2. This chain is E3 ubiquitin-protein ligase NEDD4-like (NEDD4L), found in Pongo abelii (Sumatran orangutan).